The chain runs to 466 residues: GTP cyclohydrolase 1 (466 aa).

Zn(2+) is bound by residues cysteine 342, histidine 345, and cysteine 416.

Belongs to the GTP cyclohydrolase I family. Homodimer.

It carries out the reaction GTP + H2O = 7,8-dihydroneopterin 3'-triphosphate + formate + H(+). Its pathway is cofactor biosynthesis; 7,8-dihydroneopterin triphosphate biosynthesis; 7,8-dihydroneopterin triphosphate from GTP: step 1/1. Its function is as follows. GTP cyclohydrolase 1 is the first enzyme in the biosynthetic pathway leading to folic acid. In Arabidopsis thaliana (Mouse-ear cress), this protein is GTP cyclohydrolase 1 (GCH1).